We begin with the raw amino-acid sequence, 315 residues long: Ribosomal protein L11 methyltransferase (315 aa).

Residues T164, G185, D207, and N250 each contribute to the S-adenosyl-L-methionine site.

It belongs to the methyltransferase superfamily. PrmA family.

The protein resides in the cytoplasm. It carries out the reaction L-lysyl-[protein] + 3 S-adenosyl-L-methionine = N(6),N(6),N(6)-trimethyl-L-lysyl-[protein] + 3 S-adenosyl-L-homocysteine + 3 H(+). Methylates ribosomal protein L11. This is Ribosomal protein L11 methyltransferase from Exiguobacterium sibiricum (strain DSM 17290 / CCUG 55495 / CIP 109462 / JCM 13490 / 255-15).